A 355-amino-acid polypeptide reads, in one-letter code: Probable dual-specificity RNA methyltransferase RlmN (355 aa).

Glutamate 107 (proton acceptor) is an active-site residue. In terms of domain architecture, Radical SAM core spans 113-341 (TDKRLTVCVS…VSVRYSRGLE (229 aa)). An intrachain disulfide couples cysteine 120 to cysteine 346. [4Fe-4S] cluster is bound by residues cysteine 127, cysteine 131, and cysteine 134. Residues 174-175 (GE), serine 204, 227-229 (SLH), and asparagine 303 contribute to the S-adenosyl-L-methionine site. The active-site S-methylcysteine intermediate is cysteine 346.

It belongs to the radical SAM superfamily. RlmN family. [4Fe-4S] cluster is required as a cofactor.

The protein localises to the cytoplasm. It carries out the reaction adenosine(2503) in 23S rRNA + 2 reduced [2Fe-2S]-[ferredoxin] + 2 S-adenosyl-L-methionine = 2-methyladenosine(2503) in 23S rRNA + 5'-deoxyadenosine + L-methionine + 2 oxidized [2Fe-2S]-[ferredoxin] + S-adenosyl-L-homocysteine. The enzyme catalyses adenosine(37) in tRNA + 2 reduced [2Fe-2S]-[ferredoxin] + 2 S-adenosyl-L-methionine = 2-methyladenosine(37) in tRNA + 5'-deoxyadenosine + L-methionine + 2 oxidized [2Fe-2S]-[ferredoxin] + S-adenosyl-L-homocysteine. Its function is as follows. Specifically methylates position 2 of adenine 2503 in 23S rRNA and position 2 of adenine 37 in tRNAs. This is Probable dual-specificity RNA methyltransferase RlmN from Trichormus variabilis (strain ATCC 29413 / PCC 7937) (Anabaena variabilis).